Here is a 1252-residue protein sequence, read N- to C-terminus: Immunoglobulin superfamily DCC subclass member 4 (1252 aa).

An N-terminal signal peptide occupies residues 1 to 22 (MARADTGRGLLVLTFCLLSARG). At 23–956 (ELPLPQETTV…SDSLDVHAVT (934 aa)) the chain is on the extracellular side. Ig-like domains are found at residues 27–136 (PQET…VAVV), 142–228 (EDFS…ASLT), 241–329 (QDVV…AELR), and 334–420 (PAIS…APLA). Cystine bridges form between cysteine 55–cysteine 120 and cysteine 163–cysteine 211. An N-linked (GlcNAc...) asparagine glycan is attached at asparagine 88. Asparagine 251 carries N-linked (GlcNAc...) asparagine glycosylation. Intrachain disulfides connect cysteine 264-cysteine 311 and cysteine 355-cysteine 404. Fibronectin type-III domains are found at residues 430 to 524 (APTR…TLDD), 526 to 622 (PSAA…TPGV), 631 to 742 (APAE…TPDL), 751 to 844 (PPAH…TLPD), and 849 to 944 (PPSD…TLQK). Residues 669–688 (TEEEADGDRPPGGRGDQAWD) form a disordered region. The chain crosses the membrane as a helical span at residues 957 to 977 (GIIVGVCLGLLCLLACMCAGL). Residues 978-1252 (RRSSHREALP…RAPVSSAQVP (275 aa)) lie on the Cytoplasmic side of the membrane. Threonine 994 is subject to Phosphothreonine.

The protein belongs to the immunoglobulin superfamily. DCC family. As to expression, expressed in skeletal muscle, heart and brain. Brain expression is hippocampus-specific.

Its subcellular location is the cell membrane. The polypeptide is Immunoglobulin superfamily DCC subclass member 4 (Igdcc4) (Mus musculus (Mouse)).